We begin with the raw amino-acid sequence, 420 residues long: GDP-mannose transporter 2 (420 aa).

The segment covering 1–11 (MASYTPSSSRP) has biased composition (polar residues). Residues 1 to 21 (MASYTPSSSRPHTPLGLSPRG) are disordered. Topologically, residues 1 to 76 (MASYTPSSSR…KAKKEEVCMP (76 aa)) are cytoplasmic. The helical transmembrane segment at 77–97 (ASTTVLPILSYCVASIMMTVV) threads the bilayer. Topologically, residues 98–106 (NKFVVSGRQ) are lumenal. The helical transmembrane segment at 107-127 (FTMTFLLLAIQSFVCVACVWL) threads the bilayer. At 128-145 (AKRIGVINFRDWDMNDAK) the chain is on the cytoplasmic side. Residues 146 to 168 (AWFPVSSLLVAVIYTGSKSLQFL) traverse the membrane as a helical segment. At 169–171 (SIP) the chain is on the lumenal side. Residues 172–194 (VYTIFKNLTIILIAYGEVIWFGG) form a helical membrane-spanning segment. Residues 195–200 (HVTPLT) are Cytoplasmic-facing. A helical membrane pass occupies residues 201-223 (LCSFFLMVGSSVIAAWADISTTL). Over 224 to 251 (SKLSAGVAVVDPISGADVPLSSISVMDT) the chain is Lumenal. The chain crosses the membrane as a helical span at residues 252–272 (MNVGYLWMFINCLASAGYVLF). Residues 273-293 (MRKRIKVTGFKDWDSMFYNNL) are Cytoplasmic-facing. The chain crosses the membrane as a helical span at residues 294 to 314 (LSIPVLFVFSLIIEDWGAASF). The Lumenal segment spans residues 315–323 (SRNFPEEGR). The helical transmembrane segment at 324 to 344 (AFLLSAIAFSGAAAVFISYST) threads the bilayer. Residues 345–355 (AWCVRICGATT) lie on the Cytoplasmic side of the membrane. A helical membrane pass occupies residues 356–376 (YSLVGALNKLPVAASGILFFG). The Lumenal portion of the chain corresponds to 377 to 378 (DP). A helical membrane pass occupies residues 379 to 399 (VNFGNVSAILVGGVSGIVYAV). Residues 400 to 420 (AKTNQAKVEKSKQARGGESKA) lie on the Cytoplasmic side of the membrane.

The protein belongs to the TPT transporter family. SLC35D subfamily. Homooligomer.

The protein localises to the golgi apparatus membrane. Its subcellular location is the cytoplasmic vesicle membrane. It localises to the endoplasmic reticulum membrane. Functionally, involved in the import of GDP-mannose from the cytoplasm into the Golgi lumen. The polypeptide is GDP-mannose transporter 2 (GMT2) (Cryptococcus neoformans var. neoformans serotype D (strain B-3501A) (Filobasidiella neoformans)).